Reading from the N-terminus, the 112-residue chain is Large ribosomal subunit protein eL30 (112 aa).

It belongs to the eukaryotic ribosomal protein eL30 family.

The polypeptide is Large ribosomal subunit protein eL30 (RPL30) (Lupinus luteus (European yellow lupine)).